We begin with the raw amino-acid sequence, 1056 residues long: MHSDSPMTGGGPSRLFILRPVATTLFMIAILLAGIIGYRMLPVSALPQVDYPTIQVVTLYPGASPDIMTSVVTAPLERQFGKISGLKQMTSQSSGGASVITLVFQLSLPLDVAEQDVQAAINAATNLLPNDLPYPPIYSKVNPADPPILTLAVTSDALPMIQVQDMVETRIAQRISQVGGVGLVTLAGGQRPAVRVKFNAQAIAAHGLNSETIRTTIMNANVSSAKGSFDGPTRSVTLTTNDQMKSIDEYRNLIVAYKNGAPIRLRDVATIERGAENTKLGAWANEKPAIVINVQRQPGANVIDTTDNIRAMLPELINSLPKSVNMDILTDRTVTIRASVQDVQFELLLAIALVVMVIYVFLRNATATLIPSIAVPLSLVGTFAVMYFCGFSVNNLTLMALTIAAGFVVDDAIVVIENISRYIERGEKPMAAALKGAGEIGFTIISLTFSLIAVLIPLLFMGDIVGRLFREFAITLAVAILISAVVSLTLTPMMCARMLKAEAEIKHNRFEQASEHFFERIIAIYGGWLKRVLNHPWITLGVAFSTLAFTALLYLTIPKGFFPLQDNGLIQGTLEAPQSISFNAMSDKQREVTALLLQDPDVENVTTFIGVDGSNSTLNSGRLQITLKPLNQRDIRVDEIIPRLQARVANVPDVKLYLQPTQDLTIDTQVARTQYQFTLQGTVSNDLNIWVPKLQEALKQRPELVDVGTDWQNRGLVAYINVNRDMASRLGISMTAIDNALYNAFGQRLISTIYTQANQYRVILEQDTQNEAGMNAFNNVHLIGTDNKVVPLSTIATVEQQLGYLSINHLQQFPAVTFSFNVAQEASLEAAVNAVKETERSIGMPKNINTQFQGATLAFQDALGNTLWLILAAVISMYIVLGILYESFIHPVTILSTLPTAGVGALLALMVGGYELDIIAIIGIILLIGIVKKNAIMMIDFALAAEREKGMSPYDAIFQACLLRFRPILMTTMAALLGALPLMLSTGIGAELRRPLGICMVGGLIMSQILTLFTTPVIYLLFDRLANYFKNKRQNRLQSQNQRELDHSPVNHQEPL.

12 helical membrane passes run 16 to 36, 342 to 362, 373 to 393, 396 to 416, 440 to 460, 472 to 492, 537 to 557, 869 to 889, 890 to 910, 911 to 931, 968 to 988, and 1002 to 1022; these read FILR…AGII, DVQF…YVFL, IAVP…GFSV, LTLM…IVVI, IGFT…PLLF, FAIT…TLTP, WITL…YLTI, LILA…ESFI, HPVT…LALM, VGGY…IGIV, ILMT…STGI, and GGLI…YLLF. Residues 1037–1056 are disordered; it reads LQSQNQRELDHSPVNHQEPL. Over residues 1043-1056 the composition is skewed to basic and acidic residues; it reads RELDHSPVNHQEPL.

This sequence belongs to the resistance-nodulation-cell division (RND) (TC 2.A.6) family. MdtB subfamily. Part of a tripartite efflux system composed of MdtA, MdtB and MdtC. MdtB forms a heteromultimer with MdtC.

The protein resides in the cell inner membrane. This chain is Multidrug resistance protein MdtB, found in Xenorhabdus bovienii (strain SS-2004) (Xenorhabdus nematophila subsp. bovienii).